Consider the following 147-residue polypeptide: Sentan (147 aa).

A disordered region spans residues 1–36; it reads MGGCMHSTWDHALHSRGEPRPSEAPASISAPSKMPK. The span at 8–21 shows a compositional bias: basic and acidic residues; the sequence is TWDHALHSRGEPRP. Residues 23–32 are compositionally biased toward low complexity; that stretch reads EAPASISAPS.

The protein belongs to the S-100 family. Expressed exclusively in ciliated epithelial cells. Detected in ciliated epithelium of trachea and oviduct (at protein level).

It is found in the cell projection. The protein localises to the cilium. May be a component of the linker structure that bridges the ciliary membrane and peripheral singlet microtubules. This is Sentan (Sntn) from Mus musculus (Mouse).